Reading from the N-terminus, the 633-residue chain is Putative serine/threonine-protein kinase L232 (633 aa).

Residues 10 to 314 (YTIVDKLSEG…QSRKLFYEIL (305 aa)) form the Protein kinase domain. Residues 16-24 (LSEGTYGIV) and Lys39 each bind ATP. Asp133 (proton acceptor) is an active-site residue.

It belongs to the protein kinase superfamily. Ser/Thr protein kinase family.

The enzyme catalyses L-seryl-[protein] + ATP = O-phospho-L-seryl-[protein] + ADP + H(+). It carries out the reaction L-threonyl-[protein] + ATP = O-phospho-L-threonyl-[protein] + ADP + H(+). The polypeptide is Putative serine/threonine-protein kinase L232 (Acanthamoeba polyphaga mimivirus (APMV)).